The sequence spans 384 residues: tRNA-specific 2-thiouridylase MnmA (384 aa).

Residues 21–28 and Met47 contribute to the ATP site; that span reads GMSGGVDS. The interval 107–109 is interaction with target base in tRNA; the sequence is NPD. The Nucleophile role is filled by Cys112. A disulfide bridge links Cys112 with Cys208. Gly136 contacts ATP. The segment at 158 to 160 is interaction with tRNA; it reads KDQ. The Cysteine persulfide intermediate role is filled by Cys208. Residues 320–321 form an interaction with tRNA region; sequence RY.

This sequence belongs to the MnmA/TRMU family.

Its subcellular location is the cytoplasm. The catalysed reaction is S-sulfanyl-L-cysteinyl-[protein] + uridine(34) in tRNA + AH2 + ATP = 2-thiouridine(34) in tRNA + L-cysteinyl-[protein] + A + AMP + diphosphate + H(+). Functionally, catalyzes the 2-thiolation of uridine at the wobble position (U34) of tRNA, leading to the formation of s(2)U34. This Chromohalobacter salexigens (strain ATCC BAA-138 / DSM 3043 / CIP 106854 / NCIMB 13768 / 1H11) protein is tRNA-specific 2-thiouridylase MnmA.